The primary structure comprises 281 residues: MALRFFNDISRDVNGLFNRDFFHTNPLSLNISTTTENGVNFTLKAKQGVTEGPIQTSVEGRFYDRKEGVSLSQSWSNQNRLNTRIEFSKIAPGWKGDVNAFLTPQSIKNAKFNLSYAQKSFAARTSIDILQPKDFVGSVTLGHRGFVGGTDIAYDTAAGLCARYAMSIGYLAREYSFILSTNNRQCATASFFQNVNRYLQVGTKATLQSKTSSNMNIEFVTRYVPDSISQVKAKIADSGLTTLSYKRNLNKDISLGVGMSFNALQLTEPVHKFGWSLSFSP.

Residues R11 and R19 each coordinate ATP.

The protein belongs to the eukaryotic mitochondrial porin family.

Its subcellular location is the mitochondrion outer membrane. Functionally, non-selective voltage-gated ion channel that mediates the transport of anions and cations through the mitochondrion outer membrane. The channel adopts an open conformation at low or zero membrane potential and a closed conformation at potentials above 30-40 mV. The open state has a weak anion selectivity whereas the closed state is cation-selective. Does not confer permeability to NADH. Catalyzes the scrambling of phospholipids across the outer mitochondrial membrane; the mechanism is unrelated to channel activity and is capable of translocating both anionic and zwitterionic phospholipids. The protein is Non-selective voltage-gated ion channel 2 (POR2) of Saccharomyces cerevisiae (strain ATCC 204508 / S288c) (Baker's yeast).